The following is a 293-amino-acid chain: 4-diphosphocytidyl-2-C-methyl-D-erythritol kinase (293 aa).

Lysine 16 is an active-site residue. 99 to 109 provides a ligand contact to ATP; sequence PMGAGLGGGSS. Residue aspartate 141 is part of the active site.

This sequence belongs to the GHMP kinase family. IspE subfamily.

The enzyme catalyses 4-CDP-2-C-methyl-D-erythritol + ATP = 4-CDP-2-C-methyl-D-erythritol 2-phosphate + ADP + H(+). The protein operates within isoprenoid biosynthesis; isopentenyl diphosphate biosynthesis via DXP pathway; isopentenyl diphosphate from 1-deoxy-D-xylulose 5-phosphate: step 3/6. Catalyzes the phosphorylation of the position 2 hydroxy group of 4-diphosphocytidyl-2C-methyl-D-erythritol. This is 4-diphosphocytidyl-2-C-methyl-D-erythritol kinase from Burkholderia cenocepacia (strain ATCC BAA-245 / DSM 16553 / LMG 16656 / NCTC 13227 / J2315 / CF5610) (Burkholderia cepacia (strain J2315)).